The sequence spans 468 residues: Trehalose-2-sulfate acyltransferase PapA2 (468 aa).

Belongs to the PapA acyltransferase family.

It catalyses the reaction 2-O-sulfo-alpha,alpha-trehalose + hexadecanoyl-CoA = 2-O-sulfo-2'-O-hexadecanoyl-alpha,alpha-trehalose + CoA. Required for the biosynthesis of sulfolipid-1 (SL-1), a major mycobacterial cell wall lipid. Catalyzes the acylation of trehalose-2-sulfate by adding the palmitoyl group at the 2'-position to yield the intermediate trehalose-2-sulfate-2'-palmitate (SL659). The chain is Trehalose-2-sulfate acyltransferase PapA2 (papA2) from Mycobacterium bovis (strain ATCC BAA-935 / AF2122/97).